A 486-amino-acid chain; its full sequence is N-succinylglutamate 5-semialdehyde dehydrogenase (486 aa).

220-225 (GSSRTG) contributes to the NAD(+) binding site. Residues E243 and C277 contribute to the active site.

This sequence belongs to the aldehyde dehydrogenase family. AstD subfamily.

The enzyme catalyses N-succinyl-L-glutamate 5-semialdehyde + NAD(+) + H2O = N-succinyl-L-glutamate + NADH + 2 H(+). It functions in the pathway amino-acid degradation; L-arginine degradation via AST pathway; L-glutamate and succinate from L-arginine: step 4/5. In terms of biological role, catalyzes the NAD-dependent reduction of succinylglutamate semialdehyde into succinylglutamate. The polypeptide is N-succinylglutamate 5-semialdehyde dehydrogenase (Shewanella sp. (strain W3-18-1)).